The following is a 659-amino-acid chain: Forkhead box protein P1-B (659 aa).

2 stretches are compositionally biased toward polar residues: residues 1 to 16 (MMQESGTEAANGTAHQ) and 32 to 41 (KSTTPSSDIT). Disordered stretches follow at residues 1-41 (MMQE…SDIT) and 229-263 (ENSVTNNGHRGLDLSSPSPVPLKNHNQHGSTNGQY). A C2H2-type zinc finger spans residues 289 to 314 (GVCKWPGCEAVFEDFQSFLKHLNNEH). The interval 331–352 (VQQLELQLAKDKERLQAMMTHL) is leucine-zipper. The segment at 365–369 (PLNLV) is CTBP1-binding. A disordered region spans residues 379–413 (PAASPPLSLPQTPTTPTAPLTPLSQTHSVITPTSL). A compositionally biased stretch (low complexity) spans 387–404 (LPQTPTTPTAPLTPLSQT). Positions 448 to 538 (RPPFTYASLI…PQKISGSPAL (91 aa)) form a DNA-binding region, fork-head. Residues 590-659 (GAMDHGNSNG…EDDHGTEDML (70 aa)) are disordered. Positions 595–605 (GNSNGSDSSPG) are enriched in polar residues. Residues 641-659 (PDFDHHRDYEDDHGTEDML) are compositionally biased toward basic and acidic residues.

As to expression, shows complex and dynamic expression during early embryonic development. Prominent in many regions of the developing central nervous system, particularly in midbrain-hindbrain boundary, hindbrain and spinal cord. Strongly expressed in the retina, ear, branchial arches, hatching gland, heart, pronephric duct, gut, proctodeum, pectoral fin and swim bladder.

The protein localises to the nucleus. Transcriptional repressor. The chain is Forkhead box protein P1-B (foxp1b) from Danio rerio (Zebrafish).